A 448-amino-acid polypeptide reads, in one-letter code: RNA-binding protein 42 (448 aa).

The tract at residues M1–S29 is disordered. A2 carries the N-acetylalanine modification. Gly residues predominate over residues P11–G27. A Phosphoserine modification is found at S132. R149 is modified (asymmetric dimethylarginine). Residues E204–R448 are necessary for interaction with HNRNPK. Positions L286–L324 are disordered. A compositionally biased stretch (basic and acidic residues) spans S313–L324. An RRM domain is found at F349 to W427.

This sequence belongs to the RRM RBM42 family. In terms of assembly, interacts with HNRNPK.

It is found in the nucleus. Its subcellular location is the cytoplasm. Binds (via the RRM domain) to the 3'-untranslated region (UTR) of CDKN1A mRNA. The protein is RNA-binding protein 42 (RBM42) of Bos taurus (Bovine).